A 229-amino-acid chain; its full sequence is Peptidase E (229 aa).

Active-site charge relay system residues include serine 120, aspartate 135, and histidine 157.

The protein belongs to the peptidase S51 family.

The protein resides in the cytoplasm. The enzyme catalyses Dipeptidase E catalyzes the hydrolysis of dipeptides Asp-|-Xaa. It does not act on peptides with N-terminal Glu, Asn or Gln, nor does it cleave isoaspartyl peptides.. Its function is as follows. Hydrolyzes dipeptides containing N-terminal aspartate residues. May play a role in allowing the cell to use peptide aspartate to spare carbon otherwise required for the synthesis of the aspartate family of amino acids. This is Peptidase E from Salmonella paratyphi C (strain RKS4594).